The sequence spans 569 residues: Adenine deaminase 1 (569 aa).

This sequence belongs to the metallo-dependent hydrolases superfamily. Adenine deaminase family. Requires Mn(2+) as cofactor.

It carries out the reaction adenine + H2O + H(+) = hypoxanthine + NH4(+). The chain is Adenine deaminase 1 from Rhizobium johnstonii (strain DSM 114642 / LMG 32736 / 3841) (Rhizobium leguminosarum bv. viciae).